Here is a 637-residue protein sequence, read N- to C-terminus: Type II restriction enzyme and methyltransferase RM.BcgI (637 aa).

The protein in the C-terminal section; belongs to the N(4)/N(6)-methyltransferase family. In terms of assembly, heterotrimer of two A and one B subunit. Both subunits are necessary for DNA-binding, which is sequence non-specific. It depends on Mg(2+) as a cofactor.

The catalysed reaction is Endonucleolytic cleavage of DNA to give specific double-stranded fragments with terminal 5'-phosphates.. The enzyme catalyses a 2'-deoxyadenosine in DNA + S-adenosyl-L-methionine = an N(6)-methyl-2'-deoxyadenosine in DNA + S-adenosyl-L-homocysteine + H(+). DNA restriction requires S-adenosyl-L-methionine and Mg(2+), and is inhibited by S-adenosyl-homocysteine. SAM may be a cofactor for DNA restriction. Its function is as follows. A B, G, H and S subtype restriction enzyme that recognizes the double-stranded sequence 5'-CGAN(6)TGC-3' and cleaves bilaterally and symmetrically 10 base pairs upstream and 12 base pairs downstream of the sequence to release a 34-base pair fragment. Methylation of the recognition sequence occurs on the adenine in either one or both strands; seems to methylate restricted DNA. This subunit has no methylation or DNA restriction activity on its own. The chain is Type II restriction enzyme and methyltransferase RM.BcgI from Heyndrickxia coagulans (Weizmannia coagulans).